Reading from the N-terminus, the 258-residue chain is Small ribosomal subunit protein uS3 (258 aa).

The region spanning 43–111 is the KH type-2 domain; that stretch reads IRKLMSTGLE…QVQLNILEVK (69 aa). Residues 217–258 form a disordered region; it reads AREQASAAPRARGRADRPRGRRDEGAAPQQAAAPAATTGTEA. Basic and acidic residues predominate over residues 229-241; sequence GRADRPRGRRDEG. Residues 242 to 258 show a composition bias toward low complexity; that stretch reads AAPQQAAAPAATTGTEA.

Belongs to the universal ribosomal protein uS3 family. As to quaternary structure, part of the 30S ribosomal subunit. Forms a tight complex with proteins S10 and S14.

Functionally, binds the lower part of the 30S subunit head. Binds mRNA in the 70S ribosome, positioning it for translation. The sequence is that of Small ribosomal subunit protein uS3 from Beutenbergia cavernae (strain ATCC BAA-8 / DSM 12333 / CCUG 43141 / JCM 11478 / NBRC 16432 / NCIMB 13614 / HKI 0122).